Consider the following 246-residue polypeptide: Alpha-tubulin N-acetyltransferase (246 aa).

Residues 21-202 (LTLVPDGVSR…NNFVVFHSFF (182 aa)) form the N-acetyltransferase domain. Residues 135–148 (FYVD…GYGK) and 172–181 (SNKLLGFLRK) contribute to the acetyl-CoA site.

The protein belongs to the acetyltransferase ATAT1 family.

It catalyses the reaction L-lysyl-[alpha-tubulin] + acetyl-CoA = N(6)-acetyl-L-lysyl-[alpha-tubulin] + CoA + H(+). Functionally, specifically acetylates 'Lys-40' in alpha-tubulin on the lumenal side of microtubules. Promotes microtubule destabilization and accelerates microtubule dynamics; this activity may be independent of acetylation activity. Acetylates alpha-tubulin with a slow enzymatic rate, due to a catalytic site that is not optimized for acetyl transfer. Enters the microtubule through each end and diffuses quickly throughout the lumen of microtubules. Acetylates only long/old microtubules because of its slow acetylation rate since it does not have time to act on dynamically unstable microtubules before the enzyme is released. This Leishmania major protein is Alpha-tubulin N-acetyltransferase.